The sequence spans 335 residues: Protein-arginine kinase (335 aa).

The 224-residue stretch at I21–I244 folds into the Phosphagen kinase C-terminal domain. ATP contacts are provided by residues S24 to R28, H82, R115, R166 to M170, and R197 to E202.

This sequence belongs to the ATP:guanido phosphotransferase family.

The catalysed reaction is L-arginyl-[protein] + ATP = N(omega)-phospho-L-arginyl-[protein] + ADP + H(+). Catalyzes the specific phosphorylation of arginine residues in proteins. In Staphylococcus aureus (strain Mu3 / ATCC 700698), this protein is Protein-arginine kinase.